Consider the following 283-residue polypeptide: Xyloglucan endotransglucosylase/hydrolase 2 (283 aa).

A signal peptide spans 1–30; sequence MAPSSAHNNGFYVLMLVGIVVSTMVATCAG. In terms of domain architecture, GH16 spans 31–220; it reads SFYQDFDLTW…WSKAPFTAYY (190 aa). Glutamate 106 serves as the catalytic Nucleophile. The active-site Proton donor is glutamate 110. Xyloglucan is bound at residue glutamate 110. Asparagine 114 is a glycosylation site (N-linked (GlcNAc...) asparagine). Xyloglucan is bound by residues 123–125, 133–135, 199–200, glycine 204, and arginine 272; these read HTN, NRE, and DW. Cysteine 267 and cysteine 281 form a disulfide bridge.

The protein belongs to the glycosyl hydrolase 16 family. Contains at least one intrachain disulfide bond essential for its enzymatic activity. In terms of processing, N-glycosylated; not essential for its enzymatic activity.

The protein localises to the secreted. It is found in the cell wall. Its subcellular location is the extracellular space. It localises to the apoplast. The catalysed reaction is breaks a beta-(1-&gt;4) bond in the backbone of a xyloglucan and transfers the xyloglucanyl segment on to O-4 of the non-reducing terminal glucose residue of an acceptor, which can be a xyloglucan or an oligosaccharide of xyloglucan.. Catalyzes xyloglucan endohydrolysis (XEH) and/or endotransglycosylation (XET). Cleaves and religates xyloglucan polymers, an essential constituent of the primary cell wall, and thereby participates in cell wall construction of growing tissues. The protein is Xyloglucan endotransglucosylase/hydrolase 2 of Glycine max (Soybean).